We begin with the raw amino-acid sequence, 432 residues long: FLYWCH-type zinc finger-containing protein peb-1 (432 aa).

Residues 1–33 are disordered; it reads MLGLEKPLSSDISSSSTDTSAISPISVSSMPLS. Over residues 9-26 the composition is skewed to low complexity; it reads SSDISSSSTDTSAISPIS. A DNA-binding region (required for DNA-binding) is located at residues 30-188; sequence MPLSPDKEKK…RNKEGKPRKP (159 aa). An FLYWCH-type zinc finger spans residues 53-120; sequence IVTSFKGYQK…NACTKNTHNH (68 aa). Residues 174–195 are disordered; that stretch reads SLVSARNKEGKPRKPKSKTSTN.

The protein localises to the nucleus. Functionally, putative transcription factor. Binds to specific sequence motif 5'-[TC][AGT]TGCC[GA][AT]-3' in regulatory elements of target genes such as myosin myo-2. May modulate gene expression, perhaps acting in opposition to transcription factor pha-4. Involved in morphogenesis, perhaps especially in formation of the pharynx. Plays roles in molting, feeding and morphology. This Caenorhabditis briggsae protein is FLYWCH-type zinc finger-containing protein peb-1.